Consider the following 356-residue polypeptide: Ubiquitin-conjugating enzyme E2 variant 3 (356 aa).

Positions 1–83 (MSDQPGTSRP…LEDLHNYHRE (83 aa)) are disordered. Residues 18 to 32 (PTKTATRRRARPIAI) show a composition bias toward polar residues. Residues 63–76 (QPRKTVPKNVPLED) show a composition bias toward basic and acidic residues. Residues 169–324 (DIITEFMNRS…AREFVMKMAG (156 aa)) form the UBC core domain.

Belongs to the ubiquitin-conjugating enzyme family. As to quaternary structure, may interact with pmk-3. Expressed ubiquitously.

The protein resides in the nucleus. The protein localises to the cytoplasm. It is found in the cell projection. Its subcellular location is the dendrite. It localises to the axon. The protein resides in the cilium. Its function is as follows. Possible negative regulator of polyubiquitination. May modulate the activity of the p38 MAP kinase pnk-3. May have a role in axon termination and synaptic transmission at motor and mechanosensory neurons. Plays a role in intraflagellar transport in cilia and cilium length regulation. The sequence is that of Ubiquitin-conjugating enzyme E2 variant 3 from Caenorhabditis elegans.